Here is a 100-residue protein sequence, read N- to C-terminus: Guanine nucleotide exchange factor MSS4 homolog (100 aa).

The MSS4 domain occupies 1 to 100; the sequence is MSNLRIVCQH…YLLLCSLEKN (100 aa). Residues cysteine 8, cysteine 11, cysteine 73, and cysteine 76 each contribute to the Zn(2+) site.

Belongs to the DSS4/MSS4 family.

Functionally, guanine-nucleotide-releasing protein that acts on members of the sec4/ypt1/rab subfamily. This is Guanine nucleotide exchange factor MSS4 homolog from Schizosaccharomyces pombe (strain 972 / ATCC 24843) (Fission yeast).